The chain runs to 488 residues: MFSRVGRLTTFGAQAVSNCPFRRDNIYQQPLKVTAPINDQLTSFAHSFSDSVRHRTTSFGNDPFLGVPMDDDEVIKELELLDLDSWHTKPRAPCPAPSDELELDQFWEGKNVTVCGRDPRLGKSTDCFELEAWRPTDSWQNGSSVGHPHGHQQQQQTCQQPPTHSSTTETMHDFSNFGDNMGSPLFQSPSKSAIDQLTGTSRIDEYGMPPQDRKLSKFEMDIEQESKAVDWEAWNHYLESDDDVFKRPEAFFKEEPMIMTSSDSLMTSSTSSPDSGISLYDPMIPPPSSHFPSFNLSSSSSASNLLRLSTPSAPMQQEHRAPVRMHHDVDLFSSGPLLCVPKQEDVFDDFIQQRDDDDEDYIPASEARRTSSRLNRKSATPTYLRRRDSERSWTPASDDYFPEEHQKFKKRGVVLKPSVDEETDRRRMLNRIAAVRYREKKRAEKKGRKMEFQEVADRNRILLQKERQLKREINSMKKELRKMGAIIQ.

Residues 1 to 23 (MFSRVGRLTTFGAQAVSNCPFRR) constitute a mitochondrion transit peptide. Positions 138–191 (SWQNGSSVGHPHGHQQQQQTCQQPPTHSSTTETMHDFSNFGDNMGSPLFQSPSK) are disordered. The segment covering 142-168 (GSSVGHPHGHQQQQQTCQQPPTHSSTT) has biased composition (low complexity). A Glycyl lysine isopeptide (Lys-Gly) (interchain with G-Cter in smo-1) cross-link involves residue Lys-342. The tract at residues 353–400 (QRDDDDEDYIPASEARRTSSRLNRKSATPTYLRRRDSERSWTPASDDY) is disordered. Positions 420-483 (DEETDRRRML…NSMKKELRKM (64 aa)) constitute a bZIP domain. Positions 425 to 460 (RRRMLNRIAAVRYREKKRAEKKGRKMEFQEVADRNR) are basic motif. Residues 436–441 (RYREKK) carry the Nuclear localization signal motif. Residues 462–469 (LLQKERQL) are leucine-zipper.

This sequence belongs to the bZIP family. Post-translationally, may be desumoylated by ulp-4. In terms of tissue distribution, ubiquitously expressed.

It localises to the mitochondrion matrix. It is found in the cytoplasm. Its subcellular location is the nucleus. Acts as a transcription factor during mitochondrial stress by activating the mitochondrial unfolded protein response (mtUPR). Induces nuclear and mitochondrial gene transcription, including genes coding for mitochondrial chaperones and proteins involved in glycolysis, amino acid catabolism and innate immunity. Following mitochondrial stress, restores mitochondrial respiratory capacity by limiting the transcription of oxidative phosphorylation (OXPHOS) machinery genes and by promoting the assembly of OXPHOS complexes via the up-regulation of chaperone and assembly factor genes. Component of a feedback loop involving atfs-1, atgl-1 and hlh-11. Acts together with flp-7 to negatively regulate the expression of the transcription regulator hlh-11, to promote expression of atgl-1, and thus atgl-1-dependent fat oxidation in response to mitochondrial stress. In addition, functions with hlh-11 to maintain lifespan. Promotes mtDNA maintenance and propagation of deleterious mtDNA. The protein is Stress activated transcription factor atfs-1 of Caenorhabditis elegans.